A 763-amino-acid polypeptide reads, in one-letter code: Amine oxidase [copper-containing] 3 (763 aa).

Residues 2 to 6 lie on the Cytoplasmic side of the membrane; that stretch reads TQKTT. The helical; Signal-anchor for type II membrane protein transmembrane segment at 7–27 threads the bilayer; the sequence is LVLLALAVITIFALVCVLLAG. Residues 28–763 are Extracellular-facing; the sequence is RSGDGGRLSQ…AFSHGGFTYK (736 aa). An N-linked (GlcNAc...) asparagine glycan is attached at Asn137. The cysteines at positions 198 and 199 are disulfide-linked. Asn232 and Asn294 each carry an N-linked (GlcNAc...) asparagine glycan. Asp386 (proton acceptor) is an active-site residue. A disulfide bond links Cys404 and Cys430. Catalysis depends on Tyr471, which acts as the Schiff-base intermediate with substrate; via topaquinone. Tyr471 carries the 2',4',5'-topaquinone modification. The Cu(2+) site is built by His520 and His522. 4 residues coordinate Ca(2+): Asp529, Leu530, Asp531, and Glu572. Asn581 and Asn592 each carry an N-linked (GlcNAc...) asparagine glycan. Ca(2+) is bound by residues Glu641 and Phe663. A glycan (N-linked (GlcNAc...) asparagine) is linked at Asn666. Glu667, Asp673, and Leu674 together coordinate Ca(2+). His684 serves as a coordination point for Cu(2+). A disulfide bridge links Cys734 with Cys741.

It belongs to the copper/topaquinone oxidase family. In terms of assembly, homodimer; disulfide-linked. Probably forms heterodimers with AOC2. The cofactor is Cu(2+). Ca(2+) serves as cofactor. L-topaquinone is required as a cofactor. Topaquinone (TPQ) is generated by copper-dependent autoxidation of a specific tyrosyl residue. In terms of processing, N- and O-glycosylated. Highly expressed in adipocytes, aorta and lung. Expressed at lower levels in heart, kidney, large intestine, liver, small intestine and stomach.

The protein resides in the cell membrane. The enzyme catalyses methylamine + O2 + H2O = formaldehyde + H2O2 + NH4(+). It catalyses the reaction benzylamine + O2 + H2O = benzaldehyde + H2O2 + NH4(+). The catalysed reaction is 2-phenylethylamine + O2 + H2O = 2-phenylacetaldehyde + H2O2 + NH4(+). Functionally, catalyzes the oxidative deamination of primary amines to the corresponding aldehydes with the concomitant production of hydrogen peroxide and ammonia. Has a preference for the primary monoamines methylamine and benzylamine. Could also act on 2-phenylethylamine but much less efficiently. At endothelial cells surface can also function as a cell adhesion protein that participates in lymphocyte extravasation and recirculation by mediating the binding of lymphocytes to peripheral lymph node vascular endothelial cells in an L-selectin-independent fashion. The chain is Amine oxidase [copper-containing] 3 from Rattus norvegicus (Rat).